We begin with the raw amino-acid sequence, 729 residues long: Phosphoribosylformylglycinamidine synthase subunit PurL (729 aa).

The active site involves H42. ATP contacts are provided by Y45 and K84. E86 is a Mg(2+) binding site. Substrate-binding positions include S87–H90 and R109. The active-site Proton acceptor is the H88. D110 is a binding site for Mg(2+). Q238 is a binding site for substrate. D266 serves as a coordination point for Mg(2+). Residue E310–Q312 coordinates substrate. Positions 492 and 529 each coordinate ATP. Residue N530 coordinates Mg(2+). S532 is a binding site for substrate.

The protein belongs to the FGAMS family. In terms of assembly, monomer. Part of the FGAM synthase complex composed of 1 PurL, 1 PurQ and 2 PurS subunits.

The protein localises to the cytoplasm. It catalyses the reaction N(2)-formyl-N(1)-(5-phospho-beta-D-ribosyl)glycinamide + L-glutamine + ATP + H2O = 2-formamido-N(1)-(5-O-phospho-beta-D-ribosyl)acetamidine + L-glutamate + ADP + phosphate + H(+). The protein operates within purine metabolism; IMP biosynthesis via de novo pathway; 5-amino-1-(5-phospho-D-ribosyl)imidazole from N(2)-formyl-N(1)-(5-phospho-D-ribosyl)glycinamide: step 1/2. Its function is as follows. Part of the phosphoribosylformylglycinamidine synthase complex involved in the purines biosynthetic pathway. Catalyzes the ATP-dependent conversion of formylglycinamide ribonucleotide (FGAR) and glutamine to yield formylglycinamidine ribonucleotide (FGAM) and glutamate. The FGAM synthase complex is composed of three subunits. PurQ produces an ammonia molecule by converting glutamine to glutamate. PurL transfers the ammonia molecule to FGAR to form FGAM in an ATP-dependent manner. PurS interacts with PurQ and PurL and is thought to assist in the transfer of the ammonia molecule from PurQ to PurL. In Campylobacter concisus (strain 13826), this protein is Phosphoribosylformylglycinamidine synthase subunit PurL.